Here is a 372-residue protein sequence, read N- to C-terminus: Embryonic growth/differentiation factor 1 (372 aa).

The N-terminal stretch at 1-29 (MPPPQQGPCGHHLLLLLALLLPSLPLTRA) is a signal peptide. Positions 30 to 253 (PVPPGPAAAL…LCHPLARPRR (224 aa)) are excised as a propeptide. The interval 67–86 (RRRDPQETRSGSRRTSPGVT) is disordered. Asn206 carries N-linked (GlcNAc...) asparagine glycosylation. 3 disulfides stabilise this stretch: Cys267–Cys337, Cys296–Cys369, and Cys300–Cys371.

It belongs to the TGF-beta family. In terms of assembly, homodimer; disulfide-linked. Expressed in the brain.

Its subcellular location is the secreted. May mediate cell differentiation events during embryonic development. In Homo sapiens (Human), this protein is Embryonic growth/differentiation factor 1 (GDF1).